A 591-amino-acid chain; its full sequence is Metalloendopeptidase OPG085 (591 aa).

Zn(2+) is bound at residue histidine 41. Glutamate 44 is an active-site residue. Histidine 45 contacts Zn(2+).

Belongs to the peptidase M44 family. Zn(2+) serves as cofactor. Post-translationally, undergoes proteolytic processing during the course of infection. May be cleaved into 46 kDa and 22 kDa products (Potential).

The protein localises to the virion. Probably involved in maturation of some viral proteins by processing them preferentially at Ala-Gly-|-Ser/Thr/Lys motifs. Does not seem to be responsible for the cleavage of major core proteins. This chain is Metalloendopeptidase OPG085 (OPG085), found in Homo sapiens (Human).